The sequence spans 320 residues: Ribose-phosphate pyrophosphokinase (320 aa).

Residues 43–45 (DGE) and 102–103 (RQ) contribute to the ATP site. Residues His-136 and Asp-178 each coordinate Mg(2+). The active site involves Lys-201. D-ribose 5-phosphate-binding positions include Arg-203, Asp-227, and 231 to 235 (DTAGT).

The protein belongs to the ribose-phosphate pyrophosphokinase family. Class I subfamily. In terms of assembly, homohexamer. The cofactor is Mg(2+).

The protein resides in the cytoplasm. The catalysed reaction is D-ribose 5-phosphate + ATP = 5-phospho-alpha-D-ribose 1-diphosphate + AMP + H(+). Its pathway is metabolic intermediate biosynthesis; 5-phospho-alpha-D-ribose 1-diphosphate biosynthesis; 5-phospho-alpha-D-ribose 1-diphosphate from D-ribose 5-phosphate (route I): step 1/1. Its function is as follows. Involved in the biosynthesis of the central metabolite phospho-alpha-D-ribosyl-1-pyrophosphate (PRPP) via the transfer of pyrophosphoryl group from ATP to 1-hydroxyl of ribose-5-phosphate (Rib-5-P). The polypeptide is Ribose-phosphate pyrophosphokinase (Clostridium tetani (strain Massachusetts / E88)).